The primary structure comprises 450 residues: Pancreatic triacylglycerol lipase (450 aa).

3 disulfides stabilise this stretch: cysteine 4–cysteine 10, cysteine 91–cysteine 102, and cysteine 91–cysteine 104. Serine 153 (nucleophile) is an active-site residue. Residue asparagine 167 is glycosylated (N-linked (GlcNAc...) asparagine). The active-site Charge relay system is the aspartate 177. Residues glutamate 188, arginine 191, aspartate 193, and aspartate 196 each coordinate Ca(2+). Cysteine 238 and cysteine 262 form a disulfide bridge. Histidine 264 acts as the Charge relay system in catalysis. Cystine bridges form between cysteine 286-cysteine 297, cysteine 300-cysteine 305, and cysteine 434-cysteine 450. Positions 339–450 (WRYKVSVTLS…EEVLLTLNPC (112 aa)) constitute a PLAT domain.

It belongs to the AB hydrolase superfamily. Lipase family. Forms a 1:1 stoichiometric complex with (pro)colipase/CLPS.

It is found in the secreted. The enzyme catalyses a triacylglycerol + H2O = a diacylglycerol + a fatty acid + H(+). It catalyses the reaction 1,2,3-tributanoylglycerol + H2O = dibutanoylglycerol + butanoate + H(+). The catalysed reaction is 1,2,3-tri-(9Z-octadecenoyl)-glycerol + H2O = di-(9Z)-octadecenoylglycerol + (9Z)-octadecenoate + H(+). It carries out the reaction all-trans-retinyl hexadecanoate + H2O = all-trans-retinol + hexadecanoate + H(+). The enzyme catalyses 1,2-di-(9Z-octadecenoyl)-glycerol + H2O = (9Z-octadecenoyl)-glycerol + (9Z)-octadecenoate + H(+). Inhibited by bile salts, is reactivated by (pro)colipase/CLPS. Its function is as follows. Plays an important role in fat metabolism. It preferentially splits the esters of long-chain fatty acids at positions 1 and 3, producing mainly 2-monoacylglycerol and free fatty acids, and shows considerably higher activity against insoluble emulsified substrates than against soluble ones. The chain is Pancreatic triacylglycerol lipase (PNLIP) from Sus scrofa (Pig).